We begin with the raw amino-acid sequence, 456 residues long: Armadillo repeat-containing X-linked protein 1 (456 aa).

Topologically, residues Met-1–Glu-6 are mitochondrial intermembrane. 2 mitochondrion outer membrane (MOM)-targeting sequence regions span residues Met-1–Glu-6 and Arg-26–Lys-36. A helical; Signal-anchor membrane pass occupies residues Ala-7 to Trp-29. At Gly-30–Leu-456 the chain is on the cytoplasmic side. Disordered stretches follow at residues Leu-37–Gly-106 and Arg-139–Thr-186. Over residues Trp-38 to Glu-50 the composition is skewed to acidic residues. Basic and acidic residues-rich tracts occupy residues Lys-51 to Lys-62 and Lys-72 to Val-81. Residues Ser-162 to Ser-180 are compositionally biased toward basic residues. ARM repeat units lie at residues Pro-198–Ala-238, Ser-240–Val-279, Pro-361–Asp-401, and Ser-418–Leu-456.

Belongs to the eutherian X-chromosome-specific Armcx family. As to quaternary structure, interacts with MIRO1. In terms of tissue distribution, widely expressed in the adult nervous tissue, especially in the forebrain, including the cerebral cortex, hippocampus and thalamus.

The protein resides in the mitochondrion. It localises to the mitochondrion outer membrane. Regulates mitochondrial transport during axon regeneration. Increases the proportion of motile mitochondria by recruiting stationary mitochondria into the motile pool. Enhances mitochondria movement and neurite growth in both adult axons and embryonic neurons. Promotes neuronal survival and axon regeneration after nerve injury. May link mitochondria to the Trak1-kinesin motor complex via its interaction with Miro1. This is Armadillo repeat-containing X-linked protein 1 (Armcx1) from Mus musculus (Mouse).